The chain runs to 239 residues: Leucyl/phenylalanyl-tRNA--protein transferase (239 aa).

This sequence belongs to the L/F-transferase family.

The protein localises to the cytoplasm. It carries out the reaction N-terminal L-lysyl-[protein] + L-leucyl-tRNA(Leu) = N-terminal L-leucyl-L-lysyl-[protein] + tRNA(Leu) + H(+). The enzyme catalyses N-terminal L-arginyl-[protein] + L-leucyl-tRNA(Leu) = N-terminal L-leucyl-L-arginyl-[protein] + tRNA(Leu) + H(+). It catalyses the reaction L-phenylalanyl-tRNA(Phe) + an N-terminal L-alpha-aminoacyl-[protein] = an N-terminal L-phenylalanyl-L-alpha-aminoacyl-[protein] + tRNA(Phe). Functionally, functions in the N-end rule pathway of protein degradation where it conjugates Leu, Phe and, less efficiently, Met from aminoacyl-tRNAs to the N-termini of proteins containing an N-terminal arginine or lysine. This chain is Leucyl/phenylalanyl-tRNA--protein transferase, found in Syntrophus aciditrophicus (strain SB).